A 220-amino-acid polypeptide reads, in one-letter code: uncharacterized protein (220 aa).

Helical transmembrane passes span 25–45 (YFLLGLTLAFSAVVAYISMSL), 50–70 (PGLILMLAGFYGLLFLTYKLS), 74–94 (LGILSTFAFTGFLGYTLGPIL), 105–125 (IVVLALAGTAAVFFACSAYVL), 135–155 (SGTIFALFIVLLLGMVASFFF), 158–178 (PMLYIAISGLFVVFSTLGILY), and 196–216 (VSIFVSLYNLFISLLNIFSIL).

The protein belongs to the BI1 family.

The protein resides in the cell membrane. This is an uncharacterized protein from Pasteurella multocida (strain Pm70).